The sequence spans 804 residues: Phenylalanine--tRNA ligase beta subunit (804 aa).

In terms of domain architecture, tRNA-binding spans 38 to 148 (RSYLKGFVIA…EDVPIGASFA (111 aa)). Residues 401–476 (PEIRQITFPL…RIYGLDKIKP (76 aa)) enclose the B5 domain. Aspartate 454, aspartate 460, glutamate 463, and glutamate 464 together coordinate Mg(2+). The FDX-ACB domain occupies 710-803 (SSLQMVRRDF…VTRMTGASLR (94 aa)).

This sequence belongs to the phenylalanyl-tRNA synthetase beta subunit family. Type 1 subfamily. As to quaternary structure, tetramer of two alpha and two beta subunits. The cofactor is Mg(2+).

Its subcellular location is the cytoplasm. The enzyme catalyses tRNA(Phe) + L-phenylalanine + ATP = L-phenylalanyl-tRNA(Phe) + AMP + diphosphate + H(+). This is Phenylalanine--tRNA ligase beta subunit from Bartonella henselae (strain ATCC 49882 / DSM 28221 / CCUG 30454 / Houston 1) (Rochalimaea henselae).